Reading from the N-terminus, the 276-residue chain is MTLSLKLIGYPIEHSMSPWIHNEFLKRSNLEGTYELFEISPEESFEDNVTTLKKSVLTGFNVTVPYKQKIMQFLDEVDDTANLMGAVNTVSIRDGKWIGYNTDGIGYLRSLYAAYPFLKGVTNKRVLILGAGGAARGIFHALVNEGYNNIKIANRTLSRAESIIGTNKQALAISLEEAAEELHQFDLVIQTSAVGMNEPRSIIILDRINEDTVVSDIVYQPLETHFLQLAKQRTPYIHHGHTMLLYQAQAAFEIWTGTNVNVSGMDMQIEQILKGR.

Residues 15-17 (SMS) and Thr-63 each bind shikimate. The active-site Proton acceptor is Lys-67. Asp-79 serves as a coordination point for NADP(+). Shikimate is bound by residues Asn-88 and Asp-103. Residues 130-134 (GAGGA), 154-159 (NRTLSR), and Ile-217 contribute to the NADP(+) site. A shikimate-binding site is contributed by Tyr-219. Position 240 (Gly-240) interacts with NADP(+).

It belongs to the shikimate dehydrogenase family. In terms of assembly, homodimer.

The catalysed reaction is shikimate + NADP(+) = 3-dehydroshikimate + NADPH + H(+). It participates in metabolic intermediate biosynthesis; chorismate biosynthesis; chorismate from D-erythrose 4-phosphate and phosphoenolpyruvate: step 4/7. Its function is as follows. Involved in the biosynthesis of the chorismate, which leads to the biosynthesis of aromatic amino acids. Catalyzes the reversible NADPH linked reduction of 3-dehydroshikimate (DHSA) to yield shikimate (SA). The polypeptide is Shikimate dehydrogenase (NADP(+)) (Oceanobacillus iheyensis (strain DSM 14371 / CIP 107618 / JCM 11309 / KCTC 3954 / HTE831)).